The primary structure comprises 476 residues: RuvB-like helicase 2 (476 aa).

An ATP-binding site is contributed by Val72 to Thr80.

The protein belongs to the RuvB family. May form heterododecamers with RVB1. Component of the SWR1 chromatin remodeling complex, the INO80 chromatin remodeling complex, and of the R2TP complex.

The protein localises to the nucleus. It catalyses the reaction ATP + H2O = ADP + phosphate + H(+). Its function is as follows. DNA helicase which participates in several chromatin remodeling complexes, including the SWR1 and the INO80 complexes. The SWR1 complex mediates the ATP-dependent exchange of histone H2A for the H2A variant HZT1 leading to transcriptional regulation of selected genes by chromatin remodeling. The INO80 complex remodels chromatin by shifting nucleosomes and is involved in DNA repair. Also involved in pre-rRNA processing. The chain is RuvB-like helicase 2 (RVB2) from Mycosarcoma maydis (Corn smut fungus).